The primary structure comprises 224 residues: Response regulator protein GraR (224 aa).

The region spanning 2-115 is the Response regulatory domain; sequence QILLVEDDNT…VLIAKLQAIY (114 aa). Aspartate 51 is modified (4-aspartylphosphate). The ompR/PhoB-type DNA-binding region spans 126–224; that stretch reads KRTLTWQDAV…KVGKGYMAHE (99 aa). Residues threonine 128, threonine 130, and threonine 149 each carry the phosphothreonine modification.

Interacts with GraX. Post-translationally, phosphorylated by GraS. Phosphorylated by Stk1; phosphorylation increases the DNA-binding activity of GraR.

It localises to the cytoplasm. Functionally, member of the two-component regulatory system GraR/GraS involved in resistance against cationic antimicrobial peptides (CAMPs). Upon phosphorylation by GraS, functions as a transcription regulator by direct binding to promoter regions of target genes such as adhesins, exoproteins, transporters, toxins, and proteins involved in cell wall synthesis. Down-regulates the expression of many genes involved in RNA and amino acid synthesis or glycolysis. This chain is Response regulator protein GraR (graR), found in Staphylococcus aureus (strain Mu50 / ATCC 700699).